The following is a 473-amino-acid chain: Membrane protein TMS1 (473 aa).

Topologically, residues 1–6 (MGAVIS) are cytoplasmic. Residues 7 to 29 (LPVSMAGSFVASCFGGCCSNLVT) traverse the membrane as a helical segment. The Vacuolar segment spans residues 30–38 (KTASSLGSS). Residues 39–61 (SLGTRLLYAVWLLLNSLISWVSY) traverse the membrane as a helical segment. Topologically, residues 62–81 (SANKSILWPGKTCTGTGECG) are cytoplasmic. A helical membrane pass occupies residues 82–104 (FFTVHRLNFALGCLHLILALVLT). Residues 105–118 (GVKSTNDVRAALQN) lie on the Vacuolar side of the membrane. A helical membrane pass occupies residues 119–138 (SWWSLKFILYLCLIVLSFVI). Residues 139 to 144 (PNDFYI) lie on the Cytoplasmic side of the membrane. The helical transmembrane segment at 145 to 167 (FFSKWVSVPSGAIFILVGLILLV) threads the bilayer. Over 168–194 (DFAHEWAETCISHVESEDEDSSFWQRF) the chain is Vacuolar. The chain crosses the membrane as a helical span at residues 195–217 (LVLGTTSMYTASIIMTVVMYVMF). At 218-228 (CHQQCNMNQTA) the chain is on the cytoplasmic side. A helical transmembrane segment spans residues 229-246 (VTVNLILTVITLVLSVNP). Residues 247-295 (KIQEANPKSGLAQSSMVSVYCTYLTMSAMSSEPDDKMCNPLVRSSGTRK) are Vacuolar-facing. Residues 296–318 (FSIILGSLFTFIAIAYTTTRAAA) traverse the membrane as a helical segment. At 319 to 398 (NSAFQGTNTN…DDERTGTKYN (80 aa)) the chain is on the cytoplasmic side. Residues 399 to 421 (YTLFHVIFFLATQWIAILLTINV) traverse the membrane as a helical segment. Topologically, residues 422-435 (TQDDVGDFIPVGRT) are vacuolar. The chain crosses the membrane as a helical span at residues 436-458 (YFYSWVKIVSAWICYALYGWTVV). Topologically, residues 459–473 (APAIMPDRFDYENYY) are cytoplasmic.

The protein belongs to the TDE1 family.

The protein localises to the membrane. The chain is Membrane protein TMS1 (TMS1) from Saccharomyces cerevisiae (strain ATCC 204508 / S288c) (Baker's yeast).